The primary structure comprises 59 residues: Photosystem II reaction center protein K (59 aa).

Positions 1 to 22 are excised as a propeptide; the sequence is MILYSHLSTLIDIDLSNNIFLA. Residues 30-50 form a helical membrane-spanning segment; it reads IFDPLVDVMPVIPVFFLLLAF.

This sequence belongs to the PsbK family. PSII is composed of 1 copy each of membrane proteins PsbA, PsbB, PsbC, PsbD, PsbE, PsbF, PsbH, PsbI, PsbJ, PsbK, PsbL, PsbM, PsbT, PsbX, PsbY, PsbZ, Psb30/Ycf12, at least 3 peripheral proteins of the oxygen-evolving complex and a large number of cofactors. It forms dimeric complexes.

The protein localises to the plastid. It is found in the chloroplast thylakoid membrane. In terms of biological role, one of the components of the core complex of photosystem II (PSII). PSII is a light-driven water:plastoquinone oxidoreductase that uses light energy to abstract electrons from H(2)O, generating O(2) and a proton gradient subsequently used for ATP formation. It consists of a core antenna complex that captures photons, and an electron transfer chain that converts photonic excitation into a charge separation. This is Photosystem II reaction center protein K from Chara vulgaris (Common stonewort).